The chain runs to 513 residues: Aromatic amino acid aminotransferase 2 (513 aa).

Phosphoserine is present on residues serine 90 and serine 92. Pyridoxal 5'-phosphate-binding positions include tyrosine 102, 143-144, asparagine 232, tyrosine 263, and 314-316; these read SN and TFS. Asparagine 232 serves as a coordination point for substrate. N6-(pyridoxal phosphate)lysine is present on lysine 317. Residue arginine 324 coordinates pyridoxal 5'-phosphate. Arginine 481 serves as a coordination point for substrate.

This sequence belongs to the class-I pyridoxal-phosphate-dependent aminotransferase family. Pyridoxal 5'-phosphate is required as a cofactor.

It localises to the cytoplasm. The enzyme catalyses an aromatic L-alpha-amino acid + 2-oxoglutarate = an aromatic oxo-acid + L-glutamate. The catalysed reaction is an aromatic L-alpha-amino acid + 4-methylsulfanyl-2-oxobutanoate = an aromatic oxo-acid + L-methionine. It carries out the reaction L-kynurenine + 2-oxoglutarate = kynurenate + L-glutamate + H2O. Its pathway is amino-acid biosynthesis; L-methionine biosynthesis via salvage pathway; L-methionine from S-methyl-5-thio-alpha-D-ribose 1-phosphate: step 6/6. It functions in the pathway amino-acid degradation; L-kynurenine degradation; kynurenate from L-kynurenine: step 1/2. General aromatic amino acid transaminase involved in several otherwise unrelated metabolic pathways. Mainly involved in tryptophan degradation. Active with phenylalanine, tyrosine and tryptophan as amino donors and with phenylpyruvate, hydroxyphenylpyruvate and pyruvate as amino acceptors. Does not accept glutamate or 2-oxoglutarate as substrates. Also active with methionine, leucine, glutamine and kynurenine. Catalyzes the formation of methionine from 2-keto-4-methylthiobutyrate (KMTB) in the methionine salvage pathway primarily using aromatic amino acids (tyrosine, phenylalanine and tryptophan) as the amino donors. Catalyzes the irreversible transamination of the L-tryptophan metabolite L-kynurenine to form kynurenic acid (KA) with pyruvate as amino acceptor. This chain is Aromatic amino acid aminotransferase 2, found in Saccharomyces cerevisiae (strain ATCC 204508 / S288c) (Baker's yeast).